The chain runs to 873 residues: Sine oculis-binding protein homolog (873 aa).

Positions M1 to K14 are enriched in basic and acidic residues. The tract at residues M1–E26 is disordered. 2 FCS-type zinc fingers span residues D142–A180 and F216–N256. 3 disordered regions span residues R308–N339, R413–P484, and K550–L646. The span at A318 to N339 shows a compositional bias: polar residues. Low complexity predominate over residues H417–G433. Residues I460–P484 are compositionally biased toward pro residues. Residues E614 to R625 show a composition bias toward basic and acidic residues. Residues V620–T624 carry the SUMO interaction motif 1 (SIM); mediates the binding to polysumoylated substrates motif. Phosphoserine is present on S629. The SUMO interaction motif 2 (SIM); mediates the binding to polysumoylated substrates motif lies at V653 to T657. A Glycyl lysine isopeptide (Lys-Gly) (interchain with G-Cter in SUMO2) cross-link involves residue K677. S699 is modified (phosphoserine). A disordered region spans residues A730–V771. Residues E739–P754 are compositionally biased toward pro residues.

It belongs to the SOBP family. Interacts (via SIM domains) with SUMO1 and SUMO2.

Its function is as follows. Implicated in development of the cochlea. The chain is Sine oculis-binding protein homolog from Homo sapiens (Human).